The following is a 456-amino-acid chain: Phosphomannomutase (456 aa).

The Phosphoserine intermediate role is filled by Ser-98. The Mg(2+) site is built by Ser-98, Asp-246, Asp-248, and Asp-250.

This sequence belongs to the phosphohexose mutase family. Mg(2+) serves as cofactor.

The enzyme catalyses alpha-D-mannose 1-phosphate = D-mannose 6-phosphate. It functions in the pathway nucleotide-sugar biosynthesis; GDP-alpha-D-mannose biosynthesis; alpha-D-mannose 1-phosphate from D-fructose 6-phosphate: step 2/2. It participates in bacterial outer membrane biogenesis; LPS O-antigen biosynthesis. Involved in GDP-mannose biosynthesis which serves as the activated sugar nucleotide precursor for mannose residues in cell surface polysaccharides. This enzyme participates in synthesis of the LPS O9 antigen. In Escherichia coli, this protein is Phosphomannomutase (manB).